A 396-amino-acid chain; its full sequence is Ornithine aminotransferase 2 (396 aa).

N6-(pyridoxal phosphate)lysine is present on K255.

It belongs to the class-III pyridoxal-phosphate-dependent aminotransferase family. OAT subfamily. Requires pyridoxal 5'-phosphate as cofactor.

The protein resides in the cytoplasm. The enzyme catalyses a 2-oxocarboxylate + L-ornithine = L-glutamate 5-semialdehyde + an L-alpha-amino acid. The protein operates within amino-acid biosynthesis; L-proline biosynthesis; L-glutamate 5-semialdehyde from L-ornithine: step 1/1. In terms of biological role, catalyzes the interconversion of ornithine to glutamate semialdehyde. The sequence is that of Ornithine aminotransferase 2 from Staphylococcus aureus (strain MRSA252).